The following is a 175-amino-acid chain: Catabolic 3-dehydroquinase (175 aa).

Tyr26 serves as the catalytic Proton acceptor. 3 residues coordinate substrate: Asn104, His110, and Asp117. His130 serves as the catalytic Proton donor. Residues 131 to 132 (VS) and Arg141 contribute to the substrate site.

It belongs to the type-II 3-dehydroquinase family. In terms of assembly, homododecamer. Adopts a ring-like structure, composed of an arrangement of two hexameric rings stacked on top of one another.

It catalyses the reaction 3-dehydroquinate = 3-dehydroshikimate + H2O. The protein operates within aromatic compound metabolism; 3,4-dihydroxybenzoate biosynthesis; 3,4-dihydroxybenzoate from 3-dehydroquinate: step 1/2. Is involved in the catabolism of quinate. Allows the utilization of quinate as carbon source via the beta-ketoadipate pathway. In Sordaria macrospora (strain ATCC MYA-333 / DSM 997 / K(L3346) / K-hell), this protein is Catabolic 3-dehydroquinase.